Reading from the N-terminus, the 82-residue chain is Costars family protein v1g158749 (82 aa).

This sequence belongs to the costars family.

This chain is Costars family protein v1g158749, found in Nematostella vectensis (Starlet sea anemone).